The chain runs to 201 residues: MAKRVTGPEIEKLIQLLAKVPGLGPRSARRAALHLIKKKEQLLGPLGHAMGEAYDKVKICSCCGNVDTIDPCTVCADDRRDQSVIIVVEDVSDLWALERAGAMNTAYHVLGGTLSPLDGVGPEDLNIKGLIDRVSAGGIRELIIAVNATVEGQATAHYITDRLSGLGIKITRLAHGVPVGGELDYLDEGTLTAALRARTTI.

The C4-type zinc finger occupies 60 to 75 (CSCCGNVDTIDPCTVC). One can recognise a Toprim domain in the interval 83-178 (SVIIVVEDVS…KITRLAHGVP (96 aa)).

This sequence belongs to the RecR family.

In terms of biological role, may play a role in DNA repair. It seems to be involved in an RecBC-independent recombinational process of DNA repair. It may act with RecF and RecO. This chain is Recombination protein RecR, found in Agrobacterium fabrum (strain C58 / ATCC 33970) (Agrobacterium tumefaciens (strain C58)).